Consider the following 340-residue polypeptide: DNA-directed RNA polymerase subunit alpha (340 aa).

The segment at 1–237 (MSSDELVYMN…EQMNPFINFD (237 aa)) is alpha N-terminal domain (alpha-NTD). Positions 256–340 (FNENLYRSVD…PEEDQIKEGE (85 aa)) are alpha C-terminal domain (alpha-CTD).

Belongs to the RNA polymerase alpha chain family. Homodimer. The RNAP catalytic core consists of 2 alpha, 1 beta, 1 beta' and 1 omega subunit. When a sigma factor is associated with the core the holoenzyme is formed, which can initiate transcription.

It carries out the reaction RNA(n) + a ribonucleoside 5'-triphosphate = RNA(n+1) + diphosphate. Its function is as follows. DNA-dependent RNA polymerase catalyzes the transcription of DNA into RNA using the four ribonucleoside triphosphates as substrates. The chain is DNA-directed RNA polymerase subunit alpha from Desulforapulum autotrophicum (strain ATCC 43914 / DSM 3382 / VKM B-1955 / HRM2) (Desulfobacterium autotrophicum).